Reading from the N-terminus, the 152-residue chain is Deoxyuridine 5'-triphosphate nucleotidohydrolase (152 aa).

Substrate is bound by residues 70–72 (RSG), Asn83, 87–89 (TID), and Lys97.

Belongs to the dUTPase family. Mg(2+) is required as a cofactor.

The enzyme catalyses dUTP + H2O = dUMP + diphosphate + H(+). It participates in pyrimidine metabolism; dUMP biosynthesis; dUMP from dCTP (dUTP route): step 2/2. Functionally, this enzyme is involved in nucleotide metabolism: it produces dUMP, the immediate precursor of thymidine nucleotides and it decreases the intracellular concentration of dUTP so that uracil cannot be incorporated into DNA. The polypeptide is Deoxyuridine 5'-triphosphate nucleotidohydrolase (Corynebacterium diphtheriae (strain ATCC 700971 / NCTC 13129 / Biotype gravis)).